Reading from the N-terminus, the 405-residue chain is Probable tRNA sulfurtransferase (405 aa).

A THUMP domain is found at 75–183; sequence PRAAGAAADV…QNLAYVYLET (109 aa). ATP contacts are provided by residues 201–202, Lys285, Gly307, and Gln316; that span reads LM.

It belongs to the ThiI family.

The protein resides in the cytoplasm. It carries out the reaction [ThiI sulfur-carrier protein]-S-sulfanyl-L-cysteine + a uridine in tRNA + 2 reduced [2Fe-2S]-[ferredoxin] + ATP + H(+) = [ThiI sulfur-carrier protein]-L-cysteine + a 4-thiouridine in tRNA + 2 oxidized [2Fe-2S]-[ferredoxin] + AMP + diphosphate. The enzyme catalyses [ThiS sulfur-carrier protein]-C-terminal Gly-Gly-AMP + S-sulfanyl-L-cysteinyl-[cysteine desulfurase] + AH2 = [ThiS sulfur-carrier protein]-C-terminal-Gly-aminoethanethioate + L-cysteinyl-[cysteine desulfurase] + A + AMP + 2 H(+). It functions in the pathway cofactor biosynthesis; thiamine diphosphate biosynthesis. Functionally, catalyzes the ATP-dependent transfer of a sulfur to tRNA to produce 4-thiouridine in position 8 of tRNAs, which functions as a near-UV photosensor. Also catalyzes the transfer of sulfur to the sulfur carrier protein ThiS, forming ThiS-thiocarboxylate. This is a step in the synthesis of thiazole, in the thiamine biosynthesis pathway. The sulfur is donated as persulfide by IscS. The protein is Probable tRNA sulfurtransferase of Methanosarcina mazei (strain ATCC BAA-159 / DSM 3647 / Goe1 / Go1 / JCM 11833 / OCM 88) (Methanosarcina frisia).